A 237-amino-acid chain; its full sequence is NAD(P)H-quinone oxidoreductase subunit K (237 aa).

Cys-52, Cys-53, Cys-117, and Cys-148 together coordinate [4Fe-4S] cluster.

The protein belongs to the complex I 20 kDa subunit family. In terms of assembly, NDH-1 can be composed of about 15 different subunits; different subcomplexes with different compositions have been identified which probably have different functions. [4Fe-4S] cluster serves as cofactor.

It is found in the cellular thylakoid membrane. The enzyme catalyses a plastoquinone + NADH + (n+1) H(+)(in) = a plastoquinol + NAD(+) + n H(+)(out). It carries out the reaction a plastoquinone + NADPH + (n+1) H(+)(in) = a plastoquinol + NADP(+) + n H(+)(out). Its function is as follows. NDH-1 shuttles electrons from an unknown electron donor, via FMN and iron-sulfur (Fe-S) centers, to quinones in the respiratory and/or the photosynthetic chain. The immediate electron acceptor for the enzyme in this species is believed to be plastoquinone. Couples the redox reaction to proton translocation, and thus conserves the redox energy in a proton gradient. Cyanobacterial NDH-1 also plays a role in inorganic carbon-concentration. This is NAD(P)H-quinone oxidoreductase subunit K from Thermosynechococcus vestitus (strain NIES-2133 / IAM M-273 / BP-1).